The chain runs to 153 residues: Acylphosphatase-like protein MJ0553 (153 aa).

The Acylphosphatase-like domain maps to T4–E102.

The protein is Acylphosphatase-like protein MJ0553 of Methanocaldococcus jannaschii (strain ATCC 43067 / DSM 2661 / JAL-1 / JCM 10045 / NBRC 100440) (Methanococcus jannaschii).